The sequence spans 241 residues: Carboxy-S-adenosyl-L-methionine synthase (241 aa).

S-adenosyl-L-methionine-binding positions include tyrosine 38, 63–65 (GCS), 88–89 (DN), 116–117 (DI), asparagine 131, and arginine 198.

The protein belongs to the class I-like SAM-binding methyltransferase superfamily. Cx-SAM synthase family. Homodimer.

It carries out the reaction prephenate + S-adenosyl-L-methionine = carboxy-S-adenosyl-L-methionine + 3-phenylpyruvate + H2O. Catalyzes the conversion of S-adenosyl-L-methionine (SAM) to carboxy-S-adenosyl-L-methionine (Cx-SAM). This is Carboxy-S-adenosyl-L-methionine synthase from Pseudoalteromonas translucida (strain TAC 125).